Reading from the N-terminus, the 453-residue chain is G-protein coupled receptor 39 (453 aa).

Topologically, residues 1 to 34 (MASPSLPGSDCSQIIDHSHVPEFEVATWIKITLI) are extracellular. Intrachain disulfides connect Cys11/Cys191 and Cys108/Cys210. Zn(2+) contacts are provided by His17 and His19. The helical transmembrane segment at 35–55 (LVYLIIFVMGLLGNSATIRVT) threads the bilayer. The Cytoplasmic portion of the chain corresponds to 56 to 69 (QVLQKKGYLQKEVT). Residues 70–89 (DHMVSLACSDILVFLIGMPM) traverse the membrane as a helical segment. The Extracellular segment spans residues 90–109 (EFYSIIWNPLTTSSYTLSCK). A helical membrane pass occupies residues 110–131 (LHTFLFEACSYATLLHVLTLSF). At 132–151 (ERYIAICHPFRYKAVSGPCQ) the chain is on the cytoplasmic side. A helical transmembrane segment spans residues 152-172 (VKLLIGFVWVTSALVALPLLF). Topologically, residues 173–217 (AMGTEYPLVNVPSHRGLTCNRSSTRHHEQPETSNMSICTNLSSRW) are extracellular. Asn192, Asn206, and Asn212 each carry an N-linked (GlcNAc...) asparagine glycan. Residues 218–242 (TVFQSSIFGAFVVYLVVLLSVAFMC) traverse the membrane as a helical segment. Topologically, residues 243–283 (WNMMQVLMKSQKGSLAGGTRPPQLRKSESEESRTARRQTII) are cytoplasmic. The segment at 255-274 (GSLAGGTRPPQLRKSESEES) is disordered. Residues 284 to 305 (FLRLIVVTLAVCWMPNQIRRIM) traverse the membrane as a helical segment. The Extracellular portion of the chain corresponds to 306–323 (AAAKPKHDWTRSYFRAYM). The chain crosses the membrane as a helical span at residues 324–344 (ILLPFSETFFYLSSVINPLLY). At 345 to 453 (TVSSQQFRRV…AENGFQEHEV (109 aa)) the chain is on the cytoplasmic side. A Phosphoserine modification is found at Ser396. Positions 415–453 (SEAEPQSKSQSLSLESLEPNSGAKPANSAAENGFQEHEV) are disordered. The segment covering 418-435 (EPQSKSQSLSLESLEPNS) has biased composition (low complexity).

The protein belongs to the G-protein coupled receptor 1 family. In terms of assembly, interacts with HTR1A. Interacts with GALR1. As to expression, expressed in many tissues, including the stomach, intestine and hypothalamus.

Its subcellular location is the cell membrane. Its function is as follows. Zinc-sensing receptor that can sense changes in extracellular Zn(2+), mediate Zn(2+) signal transmission, and participates in the regulation of numerous physiological processes including glucose homeostasis regulation, gastrointestinal mobility, hormone secretion and cell death. Activation by Zn(2+) in keratinocytes increases the intracellular concentration of Ca(2+) and activates the ERK/MAPK and PI3K/AKT signaling pathways leading to epithelial repair. Plays an essential role in normal wound healing by inducing the production of cytokines including the major inflammatory cytokine IL6 via the PKC/MAPK/CEBPB pathway. Regulates adipose tissue metabolism, especially lipolysis, and regulates the function of lipases, such as hormone-sensitive lipase and adipose triglyceride lipase. Plays a role in the inhibition of cell death and protects against oxidative, endoplasmic reticulum and mitochondrial stress by inducing secretion of the cytoprotective pigment epithelium-derived growth factor (PEDF) and probably other protective transcripts in a GNA13/RHOA/SRE-dependent manner. Forms dynamic heteroreceptor complexes with HTR1A and GALR1 depending on cell type or specific physiological states, resulting in signaling diversity: HTR1A-GPR39 shows additive increase in signaling along the serum response element (SRE) and NF-kappa-B pathways while GALR1 acts as an antagonist blocking SRE. This chain is G-protein coupled receptor 39 (GPR39), found in Homo sapiens (Human).